Here is a 655-residue protein sequence, read N- to C-terminus: Tumor necrosis factor receptor superfamily member 21 (655 aa).

Residues 1 to 41 form the signal peptide; it reads MGTRASSITALASCSRTAGQVGATMVAGSLLLLGFLSTITA. Residues 42–349 lie on the Extracellular side of the membrane; that stretch reads QPEQKTLSLP…AHKHFDINEH (308 aa). TNFR-Cys repeat units follow at residues 50 to 88, 90 to 131, 133 to 167, and 170 to 211; these read LPGT…LRVC, SCPA…DREC, CPPG…EDVR, and QCAR…DNVC. Cystine bridges form between cysteine 67-cysteine 80, cysteine 70-cysteine 88, cysteine 91-cysteine 106, cysteine 109-cysteine 123, cysteine 113-cysteine 131, cysteine 133-cysteine 144, cysteine 150-cysteine 168, cysteine 171-cysteine 186, and cysteine 192-cysteine 211. N-linked (GlcNAc...) asparagine glycosylation is present at asparagine 82. An N-linked (GlcNAc...) asparagine glycan is attached at asparagine 141. Disordered stretches follow at residues 222–305 and 318–339; these read PPSS…QAPH and EATG…PRQN. Polar residues-rich tracts occupy residues 241–262 and 276–302; these read VPSS…TASV and PDNT…THQQ. 4 N-linked (GlcNAc...) asparagine glycosylation sites follow: asparagine 252, asparagine 257, asparagine 278, and asparagine 289. The span at 330 to 339 shows a compositional bias: basic residues; it reads APKRGHPRQN. The helical transmembrane segment at 350-370 threads the bilayer; the sequence is LPWMIVLFLLLVLVLIVVCSI. Cysteine 368 is lipidated: S-palmitoyl cysteine. The Cytoplasmic portion of the chain corresponds to 371 to 655; the sequence is RKSSRTLKKG…SVYSHLPDLL (285 aa). A Death domain is found at 415 to 498; the sequence is GIDILKLVAA…DVVEKIRGLM (84 aa).

As to quaternary structure, associates with TRADD. Interacts with NGFR. Interacts with CASP8. Oxidized in response to reactive oxygen species (ROS), leading to endocytosis. As to expression, detected in spleen B-cells (at protein level). Ubiquitous. Highly expressed in adult spleen, thymus, testis, prostate, ovary, small intestine, colon, brain, lung and kidney, and in fetal brain, liver and lung. Detected at lower levels in adult peripheral blood leukocytes, lung, and in fetal muscle, heart, kidney, small intestine and skin. Detected in T-cells, B-cells and monocytes. In T-cells expression is highest in Th0 cells, intermediate in Th2 cells and lower in Th1 cells. Expressed at low levels in proliferating progenitors in the spinal cord, but is highly expressed by differentiating neurons within the spinal cord and adjacent dorsal root ganglia.

The protein localises to the cell membrane. Its function is as follows. Promotes apoptosis, possibly via a pathway that involves the activation of NF-kappa-B. Can also promote apoptosis mediated by BAX and by the release of cytochrome c from the mitochondria into the cytoplasm. Trophic-factor deprivation triggers the cleavage of surface APP by beta-secretase to release sAPP-beta which is further cleaved to release an N-terminal fragment of APP (N-APP). Negatively regulates oligodendrocyte survival, maturation and myelination. Plays a role in signaling cascades triggered by stimulation of T-cell receptors, in the adaptive immune response and in the regulation of T-cell differentiation and proliferation. Negatively regulates T-cell responses and the release of cytokines such as IL4, IL5, IL10, IL13 and IFNG by Th2 cells. Negatively regulates the production of IgG, IgM and IgM in response to antigens. May inhibit the activation of JNK in response to T-cell stimulation. Also acts as a regulator of pyroptosis: recruits CASP8 in response to reactive oxygen species (ROS) and subsequent oxidation, leading to activation of GSDMC. This is Tumor necrosis factor receptor superfamily member 21 (Tnfrsf21) from Mus musculus (Mouse).